Consider the following 24-residue polypeptide: MPGKVQDFFLCSLLLCIVSAGWCG.

This Escherichia coli (strain K12) protein is Positive regulator of RepFIC repA1 expression (repL).